A 404-amino-acid chain; its full sequence is Phosphoglycerate kinase (404 aa).

Substrate-binding positions include 21–23 (DFN), R36, 59–62 (HLGR), R119, and R162. Residues K213, G300, E331, and 360–363 (GGDS) contribute to the ATP site.

The protein belongs to the phosphoglycerate kinase family. In terms of assembly, monomer.

It is found in the cytoplasm. The catalysed reaction is (2R)-3-phosphoglycerate + ATP = (2R)-3-phospho-glyceroyl phosphate + ADP. The protein operates within carbohydrate degradation; glycolysis; pyruvate from D-glyceraldehyde 3-phosphate: step 2/5. This Oenococcus oeni (strain ATCC BAA-331 / PSU-1) protein is Phosphoglycerate kinase.